The sequence spans 478 residues: Glycogen synthase (478 aa).

Residue K15 coordinates ADP-alpha-D-glucose.

This sequence belongs to the glycosyltransferase 1 family. Bacterial/plant glycogen synthase subfamily.

The enzyme catalyses [(1-&gt;4)-alpha-D-glucosyl](n) + ADP-alpha-D-glucose = [(1-&gt;4)-alpha-D-glucosyl](n+1) + ADP + H(+). The protein operates within glycan biosynthesis; glycogen biosynthesis. In terms of biological role, synthesizes alpha-1,4-glucan chains using ADP-glucose. The polypeptide is Glycogen synthase (Streptococcus uberis (strain ATCC BAA-854 / 0140J)).